Here is a 47-residue protein sequence, read N- to C-terminus: Lysis protein for colicin E8 (47 aa).

The first 19 residues, 1–19 (MKKITGIILLLLAVIILAA), serve as a signal peptide directing secretion. Cys-20 carries N-palmitoyl cysteine lipidation. A lipid anchor (S-diacylglycerol cysteine) is attached at Cys-20.

It is found in the cell outer membrane. In terms of biological role, lysis proteins are required for both colicin release and partial cell lysis. This Escherichia coli protein is Lysis protein for colicin E8 (lys).